The primary structure comprises 371 residues: MKLMQELAEIIPGKAYNDVKVMVAMSGGVDSSTVAAYLHRVGYKVIGVTLQLHNNFTSTQTNRKTCCAGSDIFDAKRVAAQFGFLHYVVNMEETFRKEVIENFAESYLKGETPVPCVKCNQTVKFRDLMKIAKSLSVDALATGHYVRRLTTTNGVELHKGIDPSKDQSYFLFNTTREQLEFLRFPLGNLKKSETRDLARKLSVDISEKPESQDICFVNGKSYADVIKKFRPDAQRPGKILSTDGEVLGTHNGTIHYTIGQRHGLQLSAPIPLYVVKIDAQNNIIIVGTRDKLQQRSLYVKEVNWLDRKELTAGLECEVKLRSGADTVKGYLYPNGELLKVSLAEEPKCAIAPGQACVMYHGSKVLGGGWIV.

ATP is bound by residues A24–S31 and L50. The active-site Nucleophile is the C119. Residues C119 and C215 are joined by a disulfide bond. G143 provides a ligand contact to ATP. Positions K165–Q167 are interaction with tRNA. Catalysis depends on C215, which acts as the Cysteine persulfide intermediate.

It belongs to the MnmA/TRMU family.

Its subcellular location is the cytoplasm. The enzyme catalyses S-sulfanyl-L-cysteinyl-[protein] + uridine(34) in tRNA + AH2 + ATP = 2-thiouridine(34) in tRNA + L-cysteinyl-[protein] + A + AMP + diphosphate + H(+). Functionally, catalyzes the 2-thiolation of uridine at the wobble position (U34) of tRNA, leading to the formation of s(2)U34. This is tRNA-specific 2-thiouridylase MnmA from Neorickettsia sennetsu (strain ATCC VR-367 / Miyayama) (Ehrlichia sennetsu).